A 406-amino-acid chain; its full sequence is MNQNPIPNSFRSGPDEDGRFGIFGGRFVAETLMPLILDLQAEWENAKTDPSFKAELDHLNTHYTGRPSPLYFAERLTAELGGAKIYFKRDELNHTGSHKINNCLGQILLAKRMGKTRIIAETGAGQHGVASATVAARFGLPCIVYMGATDVERQAPNVFRMKLLGAEVRPVSSGHGTLKDAMNEALRDWVTNVDETYYMIGTAAGPHPYPEMVREFQSVIGKESREQMMAAEGRLPDMLVAAVGGGSNAIGLFHPFLDDESVRMIGVEAGGKGLDGNEHCASLTAGSPGVLHGNRTYLLQDSDGQIKDGHSISAGLDYPGIGPEHSWLKDIGRVEYVPIMDTEALEAFQLLTRTEGIIPALEPSHALAEVMKRAPKMGKDEIILMNLCGRGDKDIFTVGKILGMGL.

Residue K99 is modified to N6-(pyridoxal phosphate)lysine.

It belongs to the TrpB family. In terms of assembly, tetramer of two alpha and two beta chains. The cofactor is pyridoxal 5'-phosphate.

The enzyme catalyses (1S,2R)-1-C-(indol-3-yl)glycerol 3-phosphate + L-serine = D-glyceraldehyde 3-phosphate + L-tryptophan + H2O. It functions in the pathway amino-acid biosynthesis; L-tryptophan biosynthesis; L-tryptophan from chorismate: step 5/5. Its function is as follows. The beta subunit is responsible for the synthesis of L-tryptophan from indole and L-serine. This Allorhizobium ampelinum (strain ATCC BAA-846 / DSM 112012 / S4) (Agrobacterium vitis (strain S4)) protein is Tryptophan synthase beta chain.